A 223-amino-acid chain; its full sequence is Deoxyribose-phosphate aldolase (223 aa).

D91 (proton donor/acceptor) is an active-site residue. The active-site Schiff-base intermediate with acetaldehyde is K154. K183 acts as the Proton donor/acceptor in catalysis.

Belongs to the DeoC/FbaB aldolase family. DeoC type 1 subfamily.

The protein resides in the cytoplasm. It catalyses the reaction 2-deoxy-D-ribose 5-phosphate = D-glyceraldehyde 3-phosphate + acetaldehyde. The protein operates within carbohydrate degradation; 2-deoxy-D-ribose 1-phosphate degradation; D-glyceraldehyde 3-phosphate and acetaldehyde from 2-deoxy-alpha-D-ribose 1-phosphate: step 2/2. Its function is as follows. Catalyzes a reversible aldol reaction between acetaldehyde and D-glyceraldehyde 3-phosphate to generate 2-deoxy-D-ribose 5-phosphate. The protein is Deoxyribose-phosphate aldolase of Geobacillus sp. (strain WCH70).